A 117-amino-acid polypeptide reads, in one-letter code: Hydrogenase maturation factor HypA (117 aa).

Position 2 (His2) interacts with Ni(2+). The Zn(2+) site is built by Cys73, Cys76, Cys89, and Cys92.

This sequence belongs to the HypA/HybF family.

Functionally, involved in the maturation of [NiFe] hydrogenases. Required for nickel insertion into the metal center of the hydrogenase. The polypeptide is Hydrogenase maturation factor HypA (Pelodictyon phaeoclathratiforme (strain DSM 5477 / BU-1)).